Reading from the N-terminus, the 63-residue chain is Overexpressed in colon carcinoma 1 protein homolog (63 aa).

A compositionally biased stretch (polar residues) spans 1–10 (MGCGNSTATS). A disordered region spans residues 1 to 39 (MGCGNSTATSAAAGRGPTGAVKDTTEDSITEDDKRRNYG).

This sequence belongs to the OCC1 family.

The sequence is that of Overexpressed in colon carcinoma 1 protein homolog from Mus musculus (Mouse).